A 296-amino-acid chain; its full sequence is Protoheme IX farnesyltransferase (296 aa).

The next 9 helical transmembrane spans lie at 27-47 (IMYL…GTIH), 48-68 (PLIG…AGAL), 98-118 (ALEC…LTVN), 120-140 (VSAI…TMVL), 148-168 (IVIG…SVTG), 175-195 (LLLF…LSLL), 219-239 (HIMG…LYVA), 242-262 (VLYE…AYCL), and 274-294 (CMGL…AIAL).

This sequence belongs to the UbiA prenyltransferase family. Protoheme IX farnesyltransferase subfamily.

Its subcellular location is the cell inner membrane. The catalysed reaction is heme b + (2E,6E)-farnesyl diphosphate + H2O = Fe(II)-heme o + diphosphate. It functions in the pathway porphyrin-containing compound metabolism; heme O biosynthesis; heme O from protoheme: step 1/1. Converts heme B (protoheme IX) to heme O by substitution of the vinyl group on carbon 2 of heme B porphyrin ring with a hydroxyethyl farnesyl side group. This is Protoheme IX farnesyltransferase from Anaplasma phagocytophilum (strain HZ).